A 183-amino-acid chain; its full sequence is Caspase recruitment domain-containing protein 19 (183 aa).

Cysteine 7 and cysteine 77 are oxidised to a cystine. Residues 8-99 enclose the CARD domain; it reads DRLVQDTPFL…PLHSHLPSRY (92 aa). Residues 122–142 traverse the membrane as a helical segment; it reads GPMSFLAGLGLAAGLALLLYC.

In terms of assembly, associates with BCL10 by CARD-CARD interaction.

The protein localises to the endoplasmic reticulum membrane. The protein resides in the mitochondrion membrane. In terms of biological role, plays a role in inhibiting the effects of BCL10-induced activation of NF-kappa-B. The polypeptide is Caspase recruitment domain-containing protein 19 (Mus musculus (Mouse)).